The following is a 468-amino-acid chain: 6-phospho-beta-galactosidase (468 aa).

D-galactose 6-phosphate-binding residues include Gln19, His116, Asn159, Glu160, and Asn297. Glu160 (proton donor) is an active-site residue. The active-site Nucleophile is the Glu375. 4 residues coordinate D-galactose 6-phosphate: Ser428, Trp429, Lys435, and Tyr437.

Belongs to the glycosyl hydrolase 1 family.

The catalysed reaction is a 6-phospho-beta-D-galactoside + H2O = D-galactose 6-phosphate + an alcohol. Its pathway is carbohydrate metabolism; lactose degradation; D-galactose 6-phosphate and beta-D-glucose from lactose 6-phosphate: step 1/1. This is 6-phospho-beta-galactosidase from Streptococcus pneumoniae (strain JJA).